A 129-amino-acid polypeptide reads, in one-letter code: Ergosterol biosynthetic protein 28 (129 aa).

A run of 4 helical transmembrane segments spans residues 4 to 24 (LGYW…FGFF), 46 to 66 (TFGV…FNLE), 71 to 91 (YLAT…EYLF), and 96 to 116 (TIAN…WMLL).

It belongs to the ERG28 family.

It localises to the endoplasmic reticulum membrane. In Arabidopsis thaliana (Mouse-ear cress), this protein is Ergosterol biosynthetic protein 28.